Consider the following 71-residue polypeptide: Gas vesicle protein A (71 aa).

Residues 12–22 (LAEVIDRILDK) are alpha helix 1. Residues 23–32 (GIVIDAWVRV) form a beta-strand 1 region. The tract at residues 33 to 36 (SLVG) is beta turn. The tract at residues 37-46 (IELLAIEARI) is beta-strand 2. The interval 47-70 (VIASVETYLKYAEAVGLTQSAAVP) is alpha helix 2.

The protein belongs to the gas vesicle GvpA family. As to quaternary structure, the gas vesicle shell is 2 nm thick and consists of a single layer of this protein. It forms helical ribs nearly perpendicular to the long axis of the vesicle.

The protein localises to the gas vesicle shell. Functionally, gas vesicles (GV) are hollow, gas filled proteinaceous nanostructures found in some microorganisms. During planktonic growth they allow positioning of the organism at a favorable depth for light or nutrient acquisition. GVs are highly permeable to gas. GvpA forms the protein shell. The ratio of GvpA:GvpC is estimated to be 33:1 and more recently 25:1. The polypeptide is Gas vesicle protein A (Dolichospermum flosaquae (Anabaena flos-aquae)).